The primary structure comprises 1374 residues: DNA-directed RNA polymerase subunit beta' (1374 aa).

Zn(2+)-binding residues include C71, C73, C86, and C89. The Mg(2+) site is built by D462, D464, and D466. Residues C810, C884, C891, and C894 each coordinate Zn(2+).

This sequence belongs to the RNA polymerase beta' chain family. The RNAP catalytic core consists of 2 alpha, 1 beta, 1 beta' and 1 omega subunit. When a sigma factor is associated with the core the holoenzyme is formed, which can initiate transcription. Mg(2+) is required as a cofactor. Requires Zn(2+) as cofactor.

The enzyme catalyses RNA(n) + a ribonucleoside 5'-triphosphate = RNA(n+1) + diphosphate. Its function is as follows. DNA-dependent RNA polymerase catalyzes the transcription of DNA into RNA using the four ribonucleoside triphosphates as substrates. This Rickettsia massiliae (strain Mtu5) protein is DNA-directed RNA polymerase subunit beta'.